We begin with the raw amino-acid sequence, 284 residues long: Pantothenate synthetase (284 aa).

30–37 (MGNLHDGH) contributes to the ATP binding site. His37 serves as the catalytic Proton donor. Gln61 contacts (R)-pantoate. Gln61 lines the beta-alanine pocket. 149-152 (GEKD) is a binding site for ATP. Gln155 lines the (R)-pantoate pocket. Residues Ile178 and 186-189 (LSSR) each bind ATP.

This sequence belongs to the pantothenate synthetase family. In terms of assembly, homodimer.

The protein localises to the cytoplasm. The enzyme catalyses (R)-pantoate + beta-alanine + ATP = (R)-pantothenate + AMP + diphosphate + H(+). It functions in the pathway cofactor biosynthesis; (R)-pantothenate biosynthesis; (R)-pantothenate from (R)-pantoate and beta-alanine: step 1/1. Catalyzes the condensation of pantoate with beta-alanine in an ATP-dependent reaction via a pantoyl-adenylate intermediate. In Salmonella typhi, this protein is Pantothenate synthetase.